The following is a 28-amino-acid chain: Dermaseptin-6TR (28 aa).

Expressed by the skin glands.

Its subcellular location is the secreted. Functionally, has antimicrobial activity. This chain is Dermaseptin-6TR, found in Phyllomedusa trinitatis (Trinidad leaf frog).